Reading from the N-terminus, the 993-residue chain is General transcription factor II-I repeat domain-containing protein 1 (993 aa).

GTF2I-like repeat units lie at residues 117-211 (LGPT…EPKS) and 332-426 (LRET…DGTT). Positions 461–480 (GSRSEKSSISDECEPGTSSE) are disordered. 3 GTF2I-like repeats span residues 597 to 691 (DGIG…LEDC), 727 to 821 (LSRI…RPDD), and 824 to 918 (ANRL…ICSE). The interval 916–961 (CSEPPKIKNGNTGPKRKRKRVSEGNSISSASSNCSSSSSSSSNMDP) is disordered. A Nuclear localization signal motif is present at residues 929–936 (PKRKRKRV). Positions 938-961 (EGNSISSASSNCSSSSSSSSNMDP) are enriched in low complexity.

Belongs to the TFII-I family. As to quaternary structure, interacts (via repeats 4-5) with foxh1/fast1 (via Fork-head domain). Interacts with smad2 and smad3 (via MH1 domain) in a ligand (activin)-dependent manner. Interacts with pou5f1.1/oct-25 to form a repression complex on the promoters of the gsc and mix2 genes. In terms of tissue distribution, uniformly expressed in the embryo in pre- and early gastrula stages. Enriched in the head region of early neurula through tailbud stages.

Its subcellular location is the nucleus. Transcription factor that activates a subset of organizer-specific genes. Binds to the distal element (DE) of the gsc promoter to regulate its expression. In the presence of pou5f1.1/oct-25, forms a repression complex on the promoter of the gsc and mix2 genes to inhibit their transcription. This Xenopus laevis (African clawed frog) protein is General transcription factor II-I repeat domain-containing protein 1 (gtf2ird1).